The chain runs to 495 residues: Glucose-6-phosphate 1-dehydrogenase (495 aa).

NADP(+)-binding positions include 11 to 18 (GASGDLAK), arginine 45, 84 to 85 (DV), and lysine 147. The substrate site is built by histidine 177, lysine 181, glutamate 215, and aspartate 234. Histidine 239 serves as the catalytic Proton acceptor. Substrate contacts are provided by lysine 339 and lysine 344.

This sequence belongs to the glucose-6-phosphate dehydrogenase family.

The catalysed reaction is D-glucose 6-phosphate + NADP(+) = 6-phospho-D-glucono-1,5-lactone + NADPH + H(+). Its pathway is carbohydrate degradation; pentose phosphate pathway; D-ribulose 5-phosphate from D-glucose 6-phosphate (oxidative stage): step 1/3. Catalyzes the oxidation of glucose 6-phosphate to 6-phosphogluconolactone. The polypeptide is Glucose-6-phosphate 1-dehydrogenase (Streptococcus pneumoniae serotype 4 (strain ATCC BAA-334 / TIGR4)).